The chain runs to 45 residues: Ribosome-inactivating protein TAP-29 (45 aa).

The protein belongs to the ribosome-inactivating protein family. Type 1 RIP subfamily.

It catalyses the reaction Endohydrolysis of the N-glycosidic bond at one specific adenosine on the 28S rRNA.. Its function is as follows. Capable of inhibiting HIV-1 infection and replication. It inactivates eukaryotic 60S ribosomal subunits. This Trichosanthes kirilowii (Chinese snake gourd) protein is Ribosome-inactivating protein TAP-29.